The following is a 179-amino-acid chain: Signal peptidase complex catalytic subunit SEC11A (179 aa).

Topologically, residues 1–16 are cytoplasmic; that stretch reads MLSLDFLDDVRRMNKR. The helical; Signal-anchor for type II membrane protein transmembrane segment at 17–36 threads the bilayer; that stretch reads QLYYQVLNFGMIVSSALMIW. Topologically, residues 37-179 are lumenal; that stretch reads KGLMLITGSE…LGLFVLVHRE (143 aa). Active-site charge relay system residues include serine 56, histidine 96, and aspartate 122. The interval 165-176 is C-terminal short (CTS) helix; that stretch reads AVLFLLGLFVLV.

This sequence belongs to the peptidase S26B family. As to quaternary structure, component of the signal peptidase complex paralog A (SPC-A) composed of a catalytic subunit SEC11A and three accessory subunits SPCS1, SPCS2 and SPCS3. Within the complex, interacts with SPCS2 and SPCS3. The complex induces a local thinning of the ER membrane which is used to measure the length of the signal peptide (SP) h-region of protein substrates. This ensures the selectivity of the complex towards h-regions shorter than 18-20 amino acids.

The protein resides in the endoplasmic reticulum membrane. The catalysed reaction is Cleavage of hydrophobic, N-terminal signal or leader sequences from secreted and periplasmic proteins.. In terms of biological role, catalytic component of the signal peptidase complex (SPC) which catalyzes the cleavage of N-terminal signal sequences from nascent proteins as they are translocated into the lumen of the endoplasmic reticulum. Specifically cleaves N-terminal signal peptides that contain a hydrophobic alpha-helix (h-region) shorter than 18-20 amino acids. The protein is Signal peptidase complex catalytic subunit SEC11A (Sec11a) of Rattus norvegicus (Rat).